The sequence spans 362 residues: Phosphoserine aminotransferase (362 aa).

Residues S9 and R42 each contribute to the L-glutamate site. Pyridoxal 5'-phosphate is bound by residues G76 to R77, W102, T153, D174, and Q197. K198 bears the N6-(pyridoxal phosphate)lysine mark. N239–T240 provides a ligand contact to pyridoxal 5'-phosphate.

Belongs to the class-V pyridoxal-phosphate-dependent aminotransferase family. SerC subfamily. As to quaternary structure, homodimer. The cofactor is pyridoxal 5'-phosphate.

It localises to the cytoplasm. It catalyses the reaction O-phospho-L-serine + 2-oxoglutarate = 3-phosphooxypyruvate + L-glutamate. The catalysed reaction is 4-(phosphooxy)-L-threonine + 2-oxoglutarate = (R)-3-hydroxy-2-oxo-4-phosphooxybutanoate + L-glutamate. It participates in amino-acid biosynthesis; L-serine biosynthesis; L-serine from 3-phospho-D-glycerate: step 2/3. Its pathway is cofactor biosynthesis; pyridoxine 5'-phosphate biosynthesis; pyridoxine 5'-phosphate from D-erythrose 4-phosphate: step 3/5. Functionally, catalyzes the reversible conversion of 3-phosphohydroxypyruvate to phosphoserine and of 3-hydroxy-2-oxo-4-phosphonooxybutanoate to phosphohydroxythreonine. The sequence is that of Phosphoserine aminotransferase from Klebsiella pneumoniae (strain 342).